Here is a 716-residue protein sequence, read N- to C-terminus: Amino-acid acetyltransferase, mitochondrial (716 aa).

Residues 1–44 (MSLHTGWPRTVNSSFLKKHRSSLCTCQHTSSVLPRSFSTTPDRH) constitute a mitochondrion transit peptide. Residues 37–56 (FSTTPDRHVQQSADFSSTSR) show a composition bias toward polar residues. Disordered stretches follow at residues 37–58 (FSTT…SRSY) and 96–121 (KAQH…TLPS). The span at 101–112 (KSPDANKPEPEK) shows a compositional bias: basic and acidic residues. Residues 537 to 706 (SRPRLKLDDP…YEAVCRSIQP (170 aa)) enclose the N-acetyltransferase domain.

It belongs to the acetyltransferase family.

It is found in the mitochondrion. The enzyme catalyses L-glutamate + acetyl-CoA = N-acetyl-L-glutamate + CoA + H(+). Its pathway is amino-acid biosynthesis; L-arginine biosynthesis; N(2)-acetyl-L-ornithine from L-glutamate: step 1/4. N-acetylglutamate synthase involved in arginine biosynthesis. This chain is Amino-acid acetyltransferase, mitochondrial (arg2), found in Aspergillus fumigatus (strain CBS 144.89 / FGSC A1163 / CEA10) (Neosartorya fumigata).